A 117-amino-acid polypeptide reads, in one-letter code: G antigen 12J (117 aa).

A disordered region spans residues 1-117 (MSWRGRSTYY…PEEGEKQSQC (117 aa)). 2 stretches are compositionally biased toward acidic residues: residues 32–45 (FSDE…EEGE) and 87–96 (ECEDGPDGQE). Positions 103 to 117 (EEVKTPEEGEKQSQC) are enriched in basic and acidic residues.

It belongs to the GAGE family.

The chain is G antigen 12J (GAGE12J) from Homo sapiens (Human).